Consider the following 108-residue polypeptide: UPF0145 protein gll1048 (108 aa).

Belongs to the UPF0145 family.

In Gloeobacter violaceus (strain ATCC 29082 / PCC 7421), this protein is UPF0145 protein gll1048.